The chain runs to 444 residues: Protein translocase subunit SecY (444 aa).

The next 10 helical transmembrane spans lie at 24 to 44 (FFVI…IPGI), 77 to 97 (ILAL…LLTV), 123 to 143 (GTLV…PNMV), 153 to 173 (MFTL…MWLG), 181 to 201 (IGNG…PKAI), 215 to 235 (VLLL…VVFM), 269 to 289 (MAGV…GTLA), 318 to 338 (YVML…ALVF), 376 to 396 (LAGA…MVAW), and 400 to 420 (FYFG…FMAQ).

Belongs to the SecY/SEC61-alpha family. Component of the Sec protein translocase complex. Heterotrimer consisting of SecY, SecE and SecG subunits. The heterotrimers can form oligomers, although 1 heterotrimer is thought to be able to translocate proteins. Interacts with the ribosome. Interacts with SecDF, and other proteins may be involved. Interacts with SecA.

It localises to the cell inner membrane. The central subunit of the protein translocation channel SecYEG. Consists of two halves formed by TMs 1-5 and 6-10. These two domains form a lateral gate at the front which open onto the bilayer between TMs 2 and 7, and are clamped together by SecE at the back. The channel is closed by both a pore ring composed of hydrophobic SecY resides and a short helix (helix 2A) on the extracellular side of the membrane which forms a plug. The plug probably moves laterally to allow the channel to open. The ring and the pore may move independently. The protein is Protein translocase subunit SecY of Vibrio cholerae serotype O1 (strain ATCC 39315 / El Tor Inaba N16961).